The sequence spans 482 residues: Transcription factor Sox-9 (482 aa).

Disordered regions lie at residues 1–66 (MNLL…ETED) and 160–274 (RLRI…FRDV). Low complexity predominate over residues 30-41 (SAGSPCPSGSGS). Positions 42-52 (DTENTRPQENT) are enriched in polar residues. Composition is skewed to basic and acidic residues over residues 56 to 66 (GDPELKKETED) and 160 to 174 (RLRI…DYKY). A Glycyl lysine isopeptide (Lys-Gly) (interchain with G-Cter in SUMO) cross-link involves residue K61. Residues 63–103 (ETEDEKFPVCIREAVSQVLKGYDWTLVPMPVRVNGSSKSKP) form a dimerization (DIM) region. The PQA stretch occupies residues 63–103 (ETEDEKFPVCIREAVSQVLKGYDWTLVPMPVRVNGSSKSKP). Positions 105–173 (VKRPMNAFMV…QHKKDHPDYK (69 aa)) form a DNA-binding region, HMG box. A compositionally biased stretch (polar residues) spans 211–220 (SPHSASSMSE). A transactivation domain (TAM) region spans residues 224–308 (PGEHSGQSQG…LPPNGHPGVG (85 aa)). Short sequence motifs (9aaTAD) lie at residues 276–285 (IGELSSEVIS) and 291–299 (DVNEFDQYL). The segment at 295-395 (FDQYLPPNGH…HSPQQLNYSS (101 aa)) is disordered. 2 stretches are compositionally biased toward polar residues: residues 308–326 (GSTQ…TPSA) and 351–366 (HSLS…SQQR). Residues 366-482 (RTHIKTEQLS…QPVYTQLTRP (117 aa)) form a transactivation domain (TAC) region. K370 is covalently cross-linked (Glycyl lysine isopeptide (Lys-Gly) (interchain with G-Cter in SUMO)). Positions 375-390 (SPSHYSDQQQQHSPQQ) are enriched in low complexity. The short motif at 433–441 (SGLYSNFSY) is the 9aaTAD 3 element. A disordered region spans residues 448–482 (PMYTPIADTTGVPSIPQTHSPQHWEQPVYTQLTRP). The span at 458–482 (GVPSIPQTHSPQHWEQPVYTQLTRP) shows a compositional bias: polar residues.

In terms of assembly, interacts with the sumoylation factors ube2i/ubc9 and sumo1. Post-translationally, sumoylated. Lys-370 is the major site of sumoylation, although sumoylation at Lys-61 also occurs. Sumoylation plays a key role in regulating formation of the neural crest and otic placode. As to expression, expressed in both male and female gonads from after metamorphosis through to adult stages. In the testis, expression is restricted to the supporting Sertoli-like cells. Conversely in the ovary, expression is localized to primary oocytes (at protein level). In developing limbs, expressed before chrondrocytes form (stage 52 tadpoles) and throughout the cartilaginous anlagen until stage 56, after which expression ceases in the enlarged cells of the diaphysis. At later stages, expression continues in the chondrocytes of the epiphysis and metaphysis, and weak expression is seen in most of the diaphysis.

It localises to the nucleus. It is found in the cytoplasm. In terms of biological role, transcription factor that plays a key role in chondrocytes differentiation and skeletal development. Specifically binds the 5'-ACAAAG-3' DNA motif present in enhancers and super-enhancers and promotes expression of genes important for chondrogenesis, including COL2A1. Plays a central role in successive steps of chondrocyte differentiation. Absolutely required for precartilaginous condensation, the first step in chondrogenesis during which skeletal progenitors differentiate into prechondrocytes. Together with SOX5 and SOX6, required for overt chondrogenesis when condensed prechondrocytes differentiate into early stage chondrocytes, the second step in chondrogenesis. Later, required to direct hypertrophic maturation and block osteoblast differentiation of growth plate chondrocytes: maintains chondrocyte columnar proliferation, delays prehypertrophy and then prevents osteoblastic differentiation of chondrocytes. Also required for chondrocyte hypertrophy, both indirectly, by keeping the lineage fate of chondrocytes, and directly, by remaining present in upper hypertrophic cells. Low lipid levels are the main nutritional determinant for chondrogenic commitment of skeletal progenitor cells: when lipids levels are low, FOXO transcription factors promote expression of SOX9, which induces chondrogenic commitment and suppresses fatty acid oxidation. In addition to cartilage development, also acts as a regulator of proliferation and differentiation in epithelial stem/progenitor cells. Unlikely to play a role in sex determination but may function during testicular and ovarian differentiation. The polypeptide is Transcription factor Sox-9 (Xenopus tropicalis (Western clawed frog)).